Reading from the N-terminus, the 601-residue chain is Serine/threonine-protein phosphatase 2A 65 kDa regulatory subunit A beta isoform (601 aa).

N-acetylalanine is present on alanine 2. 15 HEAT repeats span residues 20–58 (DSLY…GVER), 59–96 (TRSE…GGPD), 97–135 (FAHC…TPVA), 136–173 (LEAY…ASNA), 174–212 (VKAE…ELDS), 213–251 (VKSE…SQDD), 252–290 (LETL…GPKI), 291–333 (TLND…RETI), 334–372 (IMNQ…GKEN), 373–411 (TIEH…GIRQ), 412–450 (LSQS…GVEF), 451–489 (FDEK…GTEW), 490–528 (AQNT…GQEI), 529–567 (TTKQ…DTNA), and 568–601 (LQGE…LALA).

The protein belongs to the phosphatase 2A regulatory subunit A family. In terms of assembly, PP2A consists of a common heterodimeric core enzyme, composed of a 36 kDa catalytic subunit (subunit C) and a 65 kDa constant regulatory subunit (PR65 or subunit A), that associates with a variety of regulatory subunits. Proteins that associate with the core dimer include three families of regulatory subunits B (the R2/B/PR55/B55, R3/B''/PR72/PR130/PR59 and R5/B'/B56 families), the 48 kDa variable regulatory subunit, viral proteins, and cell signaling molecules. Interacts with IPO9. Interacts with SGO1. Interacts with RAF1.

Functionally, the PR65 subunit of protein phosphatase 2A serves as a scaffolding molecule to coordinate the assembly of the catalytic subunit and a variable regulatory B subunit. This Homo sapiens (Human) protein is Serine/threonine-protein phosphatase 2A 65 kDa regulatory subunit A beta isoform (PPP2R1B).